The sequence spans 136 residues: UPF0310 protein SMU_442 (136 aa).

Belongs to the UPF0310 family.

This Streptococcus mutans serotype c (strain ATCC 700610 / UA159) protein is UPF0310 protein SMU_442.